A 79-amino-acid chain; its full sequence is uncharacterized protein (79 aa).

This is an uncharacterized protein from Streptomyces lividans.